The primary structure comprises 286 residues: 4-diphosphocytidyl-2-C-methyl-D-erythritol kinase (286 aa).

K11 is an active-site residue. ATP is bound at residue 93–103 (PFGAGLGGGSS). Residue D135 is part of the active site.

Belongs to the GHMP kinase family. IspE subfamily.

It carries out the reaction 4-CDP-2-C-methyl-D-erythritol + ATP = 4-CDP-2-C-methyl-D-erythritol 2-phosphate + ADP + H(+). The protein operates within isoprenoid biosynthesis; isopentenyl diphosphate biosynthesis via DXP pathway; isopentenyl diphosphate from 1-deoxy-D-xylulose 5-phosphate: step 3/6. Its function is as follows. Catalyzes the phosphorylation of the position 2 hydroxy group of 4-diphosphocytidyl-2C-methyl-D-erythritol. The protein is 4-diphosphocytidyl-2-C-methyl-D-erythritol kinase of Chlorobaculum parvum (strain DSM 263 / NCIMB 8327) (Chlorobium vibrioforme subsp. thiosulfatophilum).